The following is a 159-amino-acid chain: Ribosomal RNA large subunit methyltransferase H (159 aa).

Residues Leu-76, Gly-107, and 126 to 131 (LSKLTM) contribute to the S-adenosyl-L-methionine site.

It belongs to the RNA methyltransferase RlmH family. Homodimer.

The protein localises to the cytoplasm. It catalyses the reaction pseudouridine(1915) in 23S rRNA + S-adenosyl-L-methionine = N(3)-methylpseudouridine(1915) in 23S rRNA + S-adenosyl-L-homocysteine + H(+). In terms of biological role, specifically methylates the pseudouridine at position 1915 (m3Psi1915) in 23S rRNA. This chain is Ribosomal RNA large subunit methyltransferase H, found in Acinetobacter baumannii (strain AB307-0294).